A 305-amino-acid chain; its full sequence is N-acyl-aromatic-L-amino acid amidohydrolase (carboxylate-forming) (305 aa).

Zn(2+) is bound by residues H15 and E18. Substrate-binding positions include R57 and 64 to 65 (NR). Position 108 (H108) interacts with Zn(2+). 2 residues coordinate substrate: E171 and Y281.

This sequence belongs to the AspA/AstE family. Aspartoacylase subfamily. Homotetramer. Zn(2+) serves as cofactor.

The protein resides in the apical cell membrane. Its subcellular location is the cytoplasm. It catalyses the reaction an N-acyl-aromatic L-alpha-amino acid + H2O = an aromatic L-alpha-amino acid + a carboxylate. The catalysed reaction is an N-acetyl-L-cysteine-S-conjugate + H2O = an S-substituted L-cysteine + acetate. In terms of biological role, plays an important role in deacetylating mercapturic acids in kidney proximal tubules. This chain is N-acyl-aromatic-L-amino acid amidohydrolase (carboxylate-forming) (acy3), found in Xenopus laevis (African clawed frog).